The following is a 209-amino-acid chain: COP9 signalosome complex subunit 8 (209 aa).

Residues 8-179 form the PCI domain; that stretch reads DNAFSFRKLL…GALDVSLNRF (172 aa). The residue at position 175 (Ser175) is a Phosphoserine.

This sequence belongs to the CSN8 family. As to quaternary structure, component of the CSN complex, composed of COPS1/GPS1, COPS2, COPS3, COPS4, COPS5, COPS6, COPS7 (COPS7A or COPS7B), COPS8 and COPS9. In the complex, it probably interacts directly with COPS3, COPS4 and COPS7 (COPS7A or COPS7B).

It localises to the cytoplasm. The protein resides in the nucleus. Functionally, component of the COP9 signalosome complex (CSN), a complex involved in various cellular and developmental processes. The CSN complex is an essential regulator of the ubiquitin (Ubl) conjugation pathway by mediating the deneddylation of the cullin subunits of SCF-type E3 ligase complexes, leading to decrease the Ubl ligase activity of SCF-type complexes such as SCF, CSA or DDB2. The complex is also involved in phosphorylation of p53/TP53, c-jun/JUN, IkappaBalpha/NFKBIA, ITPK1 and IRF8/ICSBP, possibly via its association with CK2 and PKD kinases. CSN-dependent phosphorylation of TP53 and JUN promotes and protects degradation by the Ubl system, respectively. The protein is COP9 signalosome complex subunit 8 (Cops8) of Rattus norvegicus (Rat).